The primary structure comprises 224 residues: Phosphoribosylformylglycinamidine synthase subunit PurQ (224 aa).

Residues 3-224 (FGVVVFPGSN…GLLEKVVALA (222 aa)) form the Glutamine amidotransferase type-1 domain. Cys-86 serves as the catalytic Nucleophile. Residues His-195 and Glu-197 contribute to the active site.

As to quaternary structure, part of the FGAM synthase complex composed of 1 PurL, 1 PurQ and 2 PurS subunits.

Its subcellular location is the cytoplasm. The enzyme catalyses N(2)-formyl-N(1)-(5-phospho-beta-D-ribosyl)glycinamide + L-glutamine + ATP + H2O = 2-formamido-N(1)-(5-O-phospho-beta-D-ribosyl)acetamidine + L-glutamate + ADP + phosphate + H(+). It catalyses the reaction L-glutamine + H2O = L-glutamate + NH4(+). It participates in purine metabolism; IMP biosynthesis via de novo pathway; 5-amino-1-(5-phospho-D-ribosyl)imidazole from N(2)-formyl-N(1)-(5-phospho-D-ribosyl)glycinamide: step 1/2. Functionally, part of the phosphoribosylformylglycinamidine synthase complex involved in the purines biosynthetic pathway. Catalyzes the ATP-dependent conversion of formylglycinamide ribonucleotide (FGAR) and glutamine to yield formylglycinamidine ribonucleotide (FGAM) and glutamate. The FGAM synthase complex is composed of three subunits. PurQ produces an ammonia molecule by converting glutamine to glutamate. PurL transfers the ammonia molecule to FGAR to form FGAM in an ATP-dependent manner. PurS interacts with PurQ and PurL and is thought to assist in the transfer of the ammonia molecule from PurQ to PurL. The sequence is that of Phosphoribosylformylglycinamidine synthase subunit PurQ from Trichormus variabilis (strain ATCC 29413 / PCC 7937) (Anabaena variabilis).